Here is a 211-residue protein sequence, read N- to C-terminus: Nucleoside triphosphate pyrophosphatase (211 aa).

Aspartate 75 functions as the Proton acceptor in the catalytic mechanism.

This sequence belongs to the Maf family. A divalent metal cation serves as cofactor.

The protein resides in the cytoplasm. The catalysed reaction is a ribonucleoside 5'-triphosphate + H2O = a ribonucleoside 5'-phosphate + diphosphate + H(+). It catalyses the reaction a 2'-deoxyribonucleoside 5'-triphosphate + H2O = a 2'-deoxyribonucleoside 5'-phosphate + diphosphate + H(+). Functionally, nucleoside triphosphate pyrophosphatase. May have a dual role in cell division arrest and in preventing the incorporation of modified nucleotides into cellular nucleic acids. This chain is Nucleoside triphosphate pyrophosphatase, found in Prochlorococcus marinus (strain NATL2A).